Reading from the N-terminus, the 304-residue chain is Undecaprenyl-diphosphatase (304 aa).

Helical transmembrane passes span 1–21 (MSLL…FLPV), 54–74 (TTLA…AAGL), 90–110 (LAWF…LFEE), 114–134 (ALGN…LLAA), 192–212 (FLLS…KTVP), 225–245 (LVGT…LLGW), and 253–273 (LFVV…WQGV).

The protein belongs to the UppP family.

The protein resides in the cell inner membrane. The enzyme catalyses di-trans,octa-cis-undecaprenyl diphosphate + H2O = di-trans,octa-cis-undecaprenyl phosphate + phosphate + H(+). In terms of biological role, catalyzes the dephosphorylation of undecaprenyl diphosphate (UPP). Confers resistance to bacitracin. This chain is Undecaprenyl-diphosphatase, found in Anaeromyxobacter sp. (strain Fw109-5).